The following is a 148-amino-acid chain: SsrA-binding protein (148 aa).

The protein belongs to the SmpB family.

The protein localises to the cytoplasm. In terms of biological role, required for rescue of stalled ribosomes mediated by trans-translation. Binds to transfer-messenger RNA (tmRNA), required for stable association of tmRNA with ribosomes. tmRNA and SmpB together mimic tRNA shape, replacing the anticodon stem-loop with SmpB. tmRNA is encoded by the ssrA gene; the 2 termini fold to resemble tRNA(Ala) and it encodes a 'tag peptide', a short internal open reading frame. During trans-translation Ala-aminoacylated tmRNA acts like a tRNA, entering the A-site of stalled ribosomes, displacing the stalled mRNA. The ribosome then switches to translate the ORF on the tmRNA; the nascent peptide is terminated with the 'tag peptide' encoded by the tmRNA and targeted for degradation. The ribosome is freed to recommence translation, which seems to be the essential function of trans-translation. This is SsrA-binding protein from Burkholderia ambifaria (strain ATCC BAA-244 / DSM 16087 / CCUG 44356 / LMG 19182 / AMMD) (Burkholderia cepacia (strain AMMD)).